The chain runs to 403 residues: Phosphoglycerate kinase (403 aa).

Substrate is bound by residues 24 to 26, R39, 62 to 65, R121, and R161; these read DLN and HLGR. Residues K211, G299, E330, and 359 to 362 contribute to the ATP site; that span reads GGDS.

The protein belongs to the phosphoglycerate kinase family. As to quaternary structure, monomer.

It is found in the cytoplasm. It catalyses the reaction (2R)-3-phosphoglycerate + ATP = (2R)-3-phospho-glyceroyl phosphate + ADP. The protein operates within carbohydrate degradation; glycolysis; pyruvate from D-glyceraldehyde 3-phosphate: step 2/5. In Corynebacterium kroppenstedtii (strain DSM 44385 / JCM 11950 / CIP 105744 / CCUG 35717), this protein is Phosphoglycerate kinase.